A 61-amino-acid chain; its full sequence is Short neurotoxin 1 (61 aa).

Over residues 1–16 the composition is skewed to polar residues; it reads LECHNQQSSQPPTTKS. The disordered stretch occupies residues 1–20; sequence LECHNQQSSQPPTTKSCPGD. 4 disulfide bridges follow: C3–C23, C17–C40, C42–C53, and C54–C59.

It belongs to the three-finger toxin family. Short-chain subfamily. Type I alpha-neurotoxin sub-subfamily. Expressed by the venom gland.

It is found in the secreted. Functionally, binds to muscle nicotinic acetylcholine receptor (nAChR) and inhibit acetylcholine from binding to the receptor, thereby impairing neuromuscular transmission. In Hemachatus haemachatus (Rinkhals), this protein is Short neurotoxin 1.